A 112-amino-acid chain; its full sequence is Larval cuticle protein 3 (112 aa).

The first 16 residues, 1 to 16 (MFKILLVCSLAALVAA), serve as a signal peptide directing secretion. One can recognise a Chitin-binding type R&amp;R domain in the interval 31–92 (PDGFVSKLVL…PQSDLLPTPP (62 aa)).

Its function is as follows. Component of the larval cuticle. The polypeptide is Larval cuticle protein 3 (Lcp3) (Drosophila melanogaster (Fruit fly)).